The primary structure comprises 106 residues: Large ribosomal subunit protein uL24 (106 aa).

The protein belongs to the universal ribosomal protein uL24 family. Part of the 50S ribosomal subunit.

Its function is as follows. One of two assembly initiator proteins, it binds directly to the 5'-end of the 23S rRNA, where it nucleates assembly of the 50S subunit. One of the proteins that surrounds the polypeptide exit tunnel on the outside of the subunit. In Dechloromonas aromatica (strain RCB), this protein is Large ribosomal subunit protein uL24.